The chain runs to 340 residues: Glucokinase (340 aa).

17-22 is an ATP binding site; it reads GDIGGT.

Belongs to the bacterial glucokinase family.

It is found in the cytoplasm. The enzyme catalyses D-glucose + ATP = D-glucose 6-phosphate + ADP + H(+). The protein is Glucokinase of Agrobacterium fabrum (strain C58 / ATCC 33970) (Agrobacterium tumefaciens (strain C58)).